Reading from the N-terminus, the 263-residue chain is Aquaporin Lacbi1:233199 (263 aa).

The Cytoplasmic segment spans residues 1–17 (MFTLAHHRHAIRKPMAE). Residues 18–38 (FFGVALLVIFGAGAACQVVLS) traverse the membrane as a helical segment. The Extracellular portion of the chain corresponds to 39 to 44 (TNPNSF). The chain crosses the membrane as a helical span at residues 45–65 (LSINFGWAIGIAMGAWISGSI). At 66 to 88 (SGGHINPAITIAMATYRGFPWRE) the chain is on the cytoplasmic side. The short motif at 71 to 73 (NPA) is the NPA 1 element. The helical transmembrane segment at 89–109 (VPSYILAQVLGGVVGAALVYA) threads the bilayer. Over 110–143 (NYIHAIDVFEGGRHIRTQATASLFATYALPYMTQ) the chain is Extracellular. A helical transmembrane segment spans residues 144–164 (VSCFFSEFLATAVLAMMVLAL). Over 165-174 (TDNRNGAPTN) the chain is Cytoplasmic. A helical membrane pass occupies residues 175–195 (GLSPFALFVLFIGLGASLGME). Over 196–227 (TAYALNPARDFGPRLFLAMAGYGKALFNYRSQ) the chain is Extracellular. Residues 201–203 (NPA) carry the NPA 2 motif. A helical membrane pass occupies residues 228-248 (YWLWAPIIAPVLGAQAGGLLY). Residues 249 to 263 (DTFLYDGDDSPIKWR) are Cytoplasmic-facing.

This sequence belongs to the MIP/aquaporin (TC 1.A.8) family.

The protein resides in the membrane. The enzyme catalyses H2O(in) = H2O(out). In terms of biological role, probable water channel required to facilitate the transport of water across membranes. The polypeptide is Aquaporin Lacbi1:233199 (Laccaria bicolor (strain S238N-H82 / ATCC MYA-4686) (Bicoloured deceiver)).